The chain runs to 107 residues: UPF0060 membrane protein RPB_2370 (107 aa).

Transmembrane regions (helical) follow at residues Ile-5 to Leu-25, Val-31 to Val-51, Ala-61 to Val-81, and Arg-85 to Pro-105.

Belongs to the UPF0060 family.

The protein localises to the cell inner membrane. The sequence is that of UPF0060 membrane protein RPB_2370 from Rhodopseudomonas palustris (strain HaA2).